A 161-amino-acid chain; its full sequence is Small ribosomal subunit protein bS16 (161 aa).

The segment at 114 to 161 (EGGPTTEATKPKKKSPAKKAKGGEGDADAAAEKVEASAEGEQTESAES) is disordered. The span at 124–133 (PKKKSPAKKA) shows a compositional bias: basic residues.

This sequence belongs to the bacterial ribosomal protein bS16 family.

The sequence is that of Small ribosomal subunit protein bS16 from Mycobacterium marinum (strain ATCC BAA-535 / M).